The following is a 389-amino-acid chain: D-alanyl-D-alanine carboxypeptidase DacF (389 aa).

Positions 1–23 (MKRLLSTLLIGIMLLTFAPSAFA) are cleaved as a signal peptide. The active-site Acyl-ester intermediate is the S64. The active-site Proton acceptor is K67. Residue S124 is part of the active site. K230 is a substrate binding site.

The protein belongs to the peptidase S11 family.

The protein resides in the secreted. It catalyses the reaction Preferential cleavage: (Ac)2-L-Lys-D-Ala-|-D-Ala. Also transpeptidation of peptidyl-alanyl moieties that are N-acyl substituents of D-alanine.. It participates in cell wall biogenesis; peptidoglycan biosynthesis. Removes C-terminal D-alanyl residues from sugar-peptide cell wall precursors. In Bacillus subtilis (strain 168), this protein is D-alanyl-D-alanine carboxypeptidase DacF (dacF).